A 113-amino-acid chain; its full sequence is Histone H2A.Z-specific chaperone chz1 (113 aa).

Residues 1-18 (MSEEPKKIDIKGKGRAIE) show a composition bias toward basic and acidic residues. 2 disordered regions span residues 1-71 (MSEE…DPTN) and 83-113 (IDFTKVLEEGQNEDDFEEEDEDYIPPQDKTM). Composition is skewed to acidic residues over residues 20-33 (LIPDIDDEEDDVDF), 41-65 (ESDDSDDSMQEDYDDIHDEEPEDYS), and 92-105 (GQNEDDFEEEDEDY).

Belongs to the CHZ1 family. Forms a heterotrimer with H2A.Z-H2B, stabilizing the association of the histone dimer.

It localises to the cytoplasm. Its subcellular location is the nucleus. Its function is as follows. Forms a chaperone-bound H2A.Z-H2B complex that acts as a source for SWR1 complex-dependent H2A to H2A.Z histone replacement in chromatin. The chain is Histone H2A.Z-specific chaperone chz1 (chz1) from Schizosaccharomyces pombe (strain 972 / ATCC 24843) (Fission yeast).